A 506-amino-acid polypeptide reads, in one-letter code: Trans-cinnamate 4-monooxygenase (506 aa).

A helical membrane pass occupies residues 3–23; sequence LLLLEKTLLALFIAATIAVTI. Residues 213 to 218 and Ala-307 each bind (E)-cinnamate; that span reads RSRLAQ. Residue Cys-448 participates in heme binding.

This sequence belongs to the cytochrome P450 family. Heme serves as cofactor.

It localises to the membrane. It carries out the reaction (E)-cinnamate + reduced [NADPH--hemoprotein reductase] + O2 = (E)-4-coumarate + oxidized [NADPH--hemoprotein reductase] + H2O + H(+). It functions in the pathway phenylpropanoid metabolism; trans-4-coumarate biosynthesis; trans-4-coumarate from trans-cinnamate: step 1/1. In terms of biological role, catalyzes the first oxidative step of the phenylpropanoid pathway in higher plants by transforming trans-cinnamate into p-coumarate. The compounds formed by this pathway are essential components for lignification, pollination, and defense against ultraviolet light, predators and pathogens. This is Trans-cinnamate 4-monooxygenase (CYP73A3) from Medicago sativa (Alfalfa).